A 262-amino-acid chain; its full sequence is Abhydrolase domain-containing protein AFT2-1 (262 aa).

Residues 260 to 262 carry the Peroxisomal targeting signal type 1 motif; that stretch reads SKL.

This sequence belongs to the AB hydrolase superfamily. AKT2 hydrolase family.

The protein resides in the peroxisome. Its pathway is mycotoxin biosynthesis. Functionally, abhydrolase domain-containing protein; part of the gene clusters that mediate the biosynthesis of the host-selective toxins (HSTs) AF-toxins responsible for Alternaria black spot of strawberry disease by the strawberry pathotype. AF-toxin I and III are valine derivatives of 2,3-dyhydroxy-isovaleric acid and 2-hydroxy-isovaleric acid respectively, while AF II is an isoleucine derivative of 2-hydroxy-valeric acid. These derivatives are bound to a 9,10-epoxy-8-hydroxy-9-methyl-decatrienoic acid (EDA) moiety. On cellular level, AF-toxins affect plasma membrane of susceptible cells and cause a sudden increase in loss of K(+) after a few minutes of toxin treatment. The aldo-keto reductase AFTS1 catalyzes the conversion of 2-keto-isovaleric acid (2-KIV) to 2-hydroxy-isovaleric acid (2-HIV) by reduction of its ketone to an alcohol. The acyl-CoA ligase AFT1, the hydrolase AFT2 and the enoyl-CoA hydratases AFT3 and AFT6, but also the polyketide synthase AFT9, the acyl-CoA dehydrogenase AFT10, the cytochrome P450 monooxygenase AFT11 and the oxidoreductase AFT12 are all involved in the biosynthesis of the AK-, AF- and ACT-toxin common EDA structural moiety. The exact function of each enzyme, and of additional enzymes identified within the AF-toxin clusters have still to be determined. The protein is Abhydrolase domain-containing protein AFT2-1 of Alternaria alternata (Alternaria rot fungus).